The sequence spans 321 residues: Acyl-CoA 5-desaturase AL21 (321 aa).

The next 2 helical transmembrane spans lie at 42-62 (IFHI…PFTF) and 64-84 (WSAF…GTTL). His87, His92, His124, His127, and His128 together coordinate Fe cation. Residues 87–92 (HRNLTH) carry the Histidine box-1 motif. Residues 124–128 (HRYHH) carry the Histidine box-2 motif. The helical transmembrane segment at 190 to 210 (LQAALLYMFGGFPFIVWGMAV) threads the bilayer. Residues His227, His256, His259, and His260 each contribute to the Fe cation site. The Histidine box-3 motif lies at 256-260 (HNNHH).

This sequence belongs to the fatty acid desaturase type 1 family. The cofactor is Fe(2+).

The protein resides in the membrane. The enzyme catalyses (11Z,14Z)-eicosadienoyl-CoA + AH2 + O2 = (5Z,11Z,14Z)-eicosatrienoyl-CoA + A + 2 H2O. It carries out the reaction (11Z,14Z,17Z)-eicosatrienoyl-CoA + AH2 + O2 = (5Z,11Z,14Z,17Z)-eicosatetraenoyl-CoA + A + 2 H2O. It functions in the pathway lipid metabolism; polyunsaturated fatty acid biosynthesis. Its function is as follows. Catalyzes the desaturation of 20:2Delta(11,14) and 20:3Delta(11,14,17) to generate sciadonic acid (20:3Delta(5,11,14)) and juniperonic acid (20:4Delta(5,11,14,17)). The enzyme can also use 16:0 and 18:0 as substrates. The polypeptide is Acyl-CoA 5-desaturase AL21 (Anemone leveillei (Windflower)).